The following is a 422-amino-acid chain: Glycine amidinotransferase, mitochondrial (422 aa).

Residues Asp253 and His302 contribute to the active site. Cys406 functions as the Amidino-cysteine intermediate in the catalytic mechanism.

It belongs to the amidinotransferase family. Homodimer. As to expression, strongly expressed in neurons and glia of the brain, the lamina propria, submucosa and serosa of the small intestine, in oocytes and on the fringes of the pancreas. Not expressed in the retina, eye lens, heart or bulbus arteriosus. Expressed in the yolk syncytial layer in gastrula stage embryos, in the yolk syncytial layer and mature somites in early segmentation embryos and in the yolk syncytial layer and the liver of long-pec stage (48 hours post-fertilization) embryos.

The protein localises to the mitochondrion inner membrane. The enzyme catalyses L-arginine + glycine = guanidinoacetate + L-ornithine. It functions in the pathway amine and polyamine biosynthesis; creatine biosynthesis; creatine from L-arginine and glycine: step 1/2. Its function is as follows. Catalyzes the biosynthesis of guanidinoacetate, the immediate precursor of creatine. Creatine plays a vital role in energy metabolism in muscle tissues. May play a role in embryonic and central nervous system development. The polypeptide is Glycine amidinotransferase, mitochondrial (Danio rerio (Zebrafish)).